A 669-amino-acid chain; its full sequence is Beta-galactosidase (669 aa).

The first 24 residues, 1 to 24, serve as a signal peptide directing secretion; the sequence is MDFPGAARLLSLLLVPLLLGPARG. Residues 25–29 constitute a propeptide that is removed on maturation; sequence LRNAS. N-linked (GlcNAc...) asparagine glycosylation is present at Asn27. 3 residues coordinate substrate: Tyr84, Glu130, and Asn188. Glu189 functions as the Proton donor in the catalytic mechanism. Cys196 and Cys231 are oxidised to a cystine. The N-linked (GlcNAc...) asparagine glycan is linked to Asn248. Glu269 acts as the Nucleophile in catalysis. A substrate-binding site is contributed by Tyr334. Residues Asn465, Asn499, Asn547, and Asn557 are each glycosylated (N-linked (GlcNAc...) asparagine). A disulfide bridge links Cys628 with Cys636. Positions 649-669 are disordered; that stretch reads TPTSSHPLPDLSDRDSGWDRV. A compositionally biased stretch (basic and acidic residues) spans 659–669; that stretch reads LSDRDSGWDRV.

This sequence belongs to the glycosyl hydrolase 35 family. Homodimer. May form higher multimers.

It localises to the lysosome. The catalysed reaction is Hydrolysis of terminal non-reducing beta-D-galactose residues in beta-D-galactosides.. Cleaves beta-linked terminal galactosyl residues from gangliosides, glycoproteins, and glycosaminoglycans. In Felis catus (Cat), this protein is Beta-galactosidase (GLB1).